The primary structure comprises 98 residues: HssA/B-like protein 33 (98 aa).

Disordered stretches follow at residues 1–29 and 60–98; these read MTLFSSISSMSSSMTSSRSSFSSFGSGTS and AKSSGGSCGGKGGPHNHGHGNGHGPHGHGGKGSGGSCSC. Positions 60-72 are enriched in gly residues; that stretch reads AKSSGGSCGGKGG. Over residues 73–88 the composition is skewed to basic residues; it reads PHNHGHGNGHGPHGHG. Over residues 89–98 the composition is skewed to gly residues; that stretch reads GKGSGGSCSC.

This sequence belongs to the hssA/B family.

This Dictyostelium discoideum (Social amoeba) protein is HssA/B-like protein 33 (hssl33).